The sequence spans 374 residues: Ribosomal RNA large subunit methyltransferase G (374 aa).

This sequence belongs to the methyltransferase superfamily. RlmG family.

The protein localises to the cytoplasm. The catalysed reaction is guanosine(1835) in 23S rRNA + S-adenosyl-L-methionine = N(2)-methylguanosine(1835) in 23S rRNA + S-adenosyl-L-homocysteine + H(+). Its function is as follows. Specifically methylates the guanine in position 1835 (m2G1835) of 23S rRNA. This chain is Ribosomal RNA large subunit methyltransferase G, found in Pseudomonas putida (strain GB-1).